We begin with the raw amino-acid sequence, 62 residues long: Large ribosomal subunit protein bL32 (62 aa).

The protein belongs to the bacterial ribosomal protein bL32 family.

The chain is Large ribosomal subunit protein bL32 (rpmF) from Treponema pallidum (strain Nichols).